The primary structure comprises 351 residues: Nicotinate-nucleotide--dimethylbenzimidazole phosphoribosyltransferase (351 aa).

Residue E318 is the Proton acceptor of the active site.

Belongs to the CobT family.

The catalysed reaction is 5,6-dimethylbenzimidazole + nicotinate beta-D-ribonucleotide = alpha-ribazole 5'-phosphate + nicotinate + H(+). Its pathway is nucleoside biosynthesis; alpha-ribazole biosynthesis; alpha-ribazole from 5,6-dimethylbenzimidazole: step 1/2. Catalyzes the synthesis of alpha-ribazole-5'-phosphate from nicotinate mononucleotide (NAMN) and 5,6-dimethylbenzimidazole (DMB). This Chloroflexus aurantiacus (strain ATCC 29366 / DSM 635 / J-10-fl) protein is Nicotinate-nucleotide--dimethylbenzimidazole phosphoribosyltransferase.